An 823-amino-acid chain; its full sequence is Semaphorin-4B (823 aa).

The signal sequence occupies residues 1 to 30; the sequence is MGRASRSAVLRRALLLLLLLLLLRTTTTRA. The Extracellular portion of the chain corresponds to 31 to 703; it reads LGPRISVPLG…WGADKSYWNE (673 aa). The 477-residue stretch at 34–510 folds into the Sema domain; sequence RISVPLGSEE…SHSGVVQVPV (477 aa). 3 N-linked (GlcNAc...) asparagine glycosylation sites follow: Asn-53, Asn-56, and Asn-83. Cys-107 and Cys-118 are disulfide-bonded. N-linked (GlcNAc...) asparagine glycosylation occurs at Asn-129. Disulfide bonds link Cys-136–Cys-145, Cys-273–Cys-386, and Cys-297–Cys-346. Asn-397 and Asn-512 each carry an N-linked (GlcNAc...) asparagine glycan. The 71-residue stretch at 512–582 folds into the PSI domain; it reads NCSLYPTCGD…RFLVPGKPCK (71 aa). Cysteines 513 and 530 form a disulfide. Residues Asn-567, Asn-615, and Asn-680 are each glycosylated (N-linked (GlcNAc...) asparagine). The Ig-like C2-type domain maps to 589–649; sequence NTVNTLACPL…FQCWSIEEGF (61 aa). Cysteines 596 and 642 form a disulfide. The helical transmembrane segment at 704 to 724 threads the bilayer; that stretch reads FLVMCTLFVFAMVLLFLFFLY. The Cytoplasmic segment spans residues 725 to 823; sequence RHRDGMKLFL…LGSEIRDSVV (99 aa). Phosphoserine occurs at positions 779, 780, 804, and 816.

It belongs to the semaphorin family. As to quaternary structure, interacts with GIPC PDZ domain.

It is found in the membrane. Its function is as follows. Inhibits axonal extension by providing local signals to specify territories inaccessible for growing axons. The polypeptide is Semaphorin-4B (Mus musculus (Mouse)).